A 263-amino-acid chain; its full sequence is Pheophorbidase (263 aa).

Residues His-13 to Phe-244 enclose the AB hydrolase-1 domain. Ser-88 functions as the Acyl-ester intermediate in the catalytic mechanism. Active-site charge relay system residues include Asp-212 and His-240.

This sequence belongs to the AB hydrolase superfamily. As to quaternary structure, homodimer.

The protein resides in the cytoplasm. The enzyme catalyses pheophorbide a + H2O + H(+) = pyropheophorbide a + methanol + CO2. Inhibited by methanol and phenylmethylsulfonicfluoride (PMSF). In terms of biological role, involved in chlorophyll degradation. Specific for the pheophorbides of the dihydroporphyrin and tetrahydroporphyrin types. Chlorophyllide a, pheophytin a and the nonfluorescent chlorophyll catabolite (NCC) are not used as substrates. This is Pheophorbidase (PPD) from Raphanus sativus (Radish).